Reading from the N-terminus, the 523-residue chain is Synaptotagmin-10 (523 aa).

Residues 1-55 (MSFHKEDGVNSLCQKALHIVTELCFAGQVEWEKCSGIFPRDRGSQGGSSTDISVS) are Vesicular-facing. Positions 13 to 35 (CQKALHIVTELCFAGQVEWEKCS) are cysteine motif. Residues 56 to 76 (LLAVVVSFCGLALLVVSLFVF) traverse the membrane as a helical segment. Over 77–523 (WKLCWPCWKS…CPSPKPPSTP (447 aa)) the chain is Cytoplasmic. Residue Thr136 is modified to Phosphothreonine. C2 domains lie at 231 to 352 (ICGK…TVWK) and 363 to 496 (DLGE…THWH). 11 residues coordinate Ca(2+): Asp262, Asp268, Asp320, Phe321, Asp322, Ser325, Asp328, Asp394, Asp400, Asp454, and Asp456.

The protein belongs to the synaptotagmin family. As to quaternary structure, homodimer; disulfide-linked via the cysteine motif. Can also form heterodimers with SYT3, SYT6, SYT7 and SYT9. Ca(2+) serves as cofactor.

The protein localises to the cytoplasmic vesicle. It is found in the secretory vesicle membrane. Functionally, ca(2+) sensor specifically required for the Ca(2+)-dependent exocytosis of secretory vesicles containing IGF1 in neurons of the olfactory bulb. Exocytosis of IGF1 is required for sensory perception of smell. Not involved in Ca(2+)-dependent synaptic vesicle exocytosis. Acts through Ca(2+) and phospholipid binding to the C2 domain: Ca(2+) induces binding of the C2-domains to phospholipid membranes and to assembled SNARE-complexes; both actions contribute to triggering exocytosis. The protein is Synaptotagmin-10 (SYT10) of Pongo abelii (Sumatran orangutan).